Consider the following 250-residue polypeptide: NADH-quinone oxidoreductase subunit C (250 aa).

This sequence belongs to the complex I 30 kDa subunit family. In terms of assembly, NDH-1 is composed of 14 different subunits. Subunits NuoB, C, D, E, F, and G constitute the peripheral sector of the complex.

The protein resides in the cell inner membrane. The enzyme catalyses a quinone + NADH + 5 H(+)(in) = a quinol + NAD(+) + 4 H(+)(out). Functionally, NDH-1 shuttles electrons from NADH, via FMN and iron-sulfur (Fe-S) centers, to quinones in the respiratory chain. The immediate electron acceptor for the enzyme in this species is believed to be ubiquinone. Couples the redox reaction to proton translocation (for every two electrons transferred, four hydrogen ions are translocated across the cytoplasmic membrane), and thus conserves the redox energy in a proton gradient. The polypeptide is NADH-quinone oxidoreductase subunit C (Xylella fastidiosa (strain M23)).